The chain runs to 321 residues: Coproporphyrin III ferrochelatase (321 aa).

H185 and E267 together coordinate Fe(2+).

Belongs to the ferrochelatase family.

It localises to the cytoplasm. The catalysed reaction is Fe-coproporphyrin III + 2 H(+) = coproporphyrin III + Fe(2+). It participates in porphyrin-containing compound metabolism; protoheme biosynthesis. Involved in coproporphyrin-dependent heme b biosynthesis. Catalyzes the insertion of ferrous iron into coproporphyrin III to form Fe-coproporphyrin III. The sequence is that of Coproporphyrin III ferrochelatase from Lacticaseibacillus paracasei (strain ATCC 334 / BCRC 17002 / CCUG 31169 / CIP 107868 / KCTC 3260 / NRRL B-441) (Lactobacillus paracasei).